Here is a 615-residue protein sequence, read N- to C-terminus: Chaperone protein HscA homolog (615 aa).

Belongs to the heat shock protein 70 family.

Its function is as follows. Chaperone involved in the maturation of iron-sulfur cluster-containing proteins. Has a low intrinsic ATPase activity which is markedly stimulated by HscB. This is Chaperone protein HscA homolog from Aeromonas salmonicida (strain A449).